Here is a 305-residue protein sequence, read N- to C-terminus: MNKFTNLLIKRTASSLKGGDFRELFRKNYIPITQFEKVLLSVTSCVEGLKNPTDSNSVACITELTSNRALRRLQILMNSTPDGRRIIKNRPLIDSSKYSIKDLMAFPDDSLGRRYGEFLTTYNLEINRDPVRYVNSEDLAYVLTRFRQIHDILHTAFELNITVESEVTLKLFEFLHAGIPFGAIGAFMGLFITPILKVRPKEIFENHNKTHVYPSKPIQIHQDCDKYLNSLEITKKEILYPKRIVIKELIPWIYKAEKKMRHNIYTIMVEDWFPRPIADFQNYLNISPPPKQLQKYTRIKPMPFC.

Zn(2+)-binding residues include histidine 150, aspartate 151, histidine 154, and glutamate 166.

Belongs to the COQ4 family. In terms of assembly, component of a multi-subunit COQ enzyme complex. Requires Zn(2+) as cofactor.

Its subcellular location is the mitochondrion inner membrane. It carries out the reaction a 4-hydroxy-3-methoxy-5-(all-trans-polyprenyl)benzoate + H(+) = a 2-methoxy-6-(all-trans-polyprenyl)phenol + CO2. It participates in cofactor biosynthesis; ubiquinone biosynthesis. Functionally, lyase that catalyzes the C1-decarboxylation of 4-hydroxy-3-methoxy-5-(all-trans-polyprenyl)benzoic acid into 2-methoxy-6-(all-trans-polyprenyl)phenol during ubiquinone biosynthesis. The sequence is that of Ubiquinone biosynthesis protein COQ4 homolog, mitochondrial from Cryptosporidium parvum (strain Iowa II).